The sequence spans 622 residues: 1,4-alpha-glucan branching enzyme GlgB (622 aa).

The active-site Nucleophile is Asp-300. Glu-351 serves as the catalytic Proton donor.

It belongs to the glycosyl hydrolase 13 family. GlgB subfamily. As to quaternary structure, monomer.

It carries out the reaction Transfers a segment of a (1-&gt;4)-alpha-D-glucan chain to a primary hydroxy group in a similar glucan chain.. It functions in the pathway glycan biosynthesis; glycogen biosynthesis. Functionally, catalyzes the formation of the alpha-1,6-glucosidic linkages in glycogen by scission of a 1,4-alpha-linked oligosaccharide from growing alpha-1,4-glucan chains and the subsequent attachment of the oligosaccharide to the alpha-1,6 position. The protein is 1,4-alpha-glucan branching enzyme GlgB of Streptococcus agalactiae serotype III (strain NEM316).